Reading from the N-terminus, the 317-residue chain is Tyrosine--tRNA ligase (317 aa).

Tyrosine 33 lines the L-tyrosine pocket. The short motif at 38–46 (PSGKIHMGH) is the 'HIGH' region element. Residues tyrosine 155, glutamine 159, aspartate 162, and glutamine 177 each coordinate L-tyrosine. Positions 211–215 (KMASS) match the 'KMSKS' region motif. Serine 214 lines the ATP pocket.

The protein belongs to the class-I aminoacyl-tRNA synthetase family. TyrS type 3 subfamily. Homodimer.

Its subcellular location is the cytoplasm. It catalyses the reaction tRNA(Tyr) + L-tyrosine + ATP = L-tyrosyl-tRNA(Tyr) + AMP + diphosphate + H(+). Its function is as follows. Catalyzes the attachment of tyrosine to tRNA(Tyr) in a two-step reaction: tyrosine is first activated by ATP to form Tyr-AMP and then transferred to the acceptor end of tRNA(Tyr). The protein is Tyrosine--tRNA ligase of Methanosarcina acetivorans (strain ATCC 35395 / DSM 2834 / JCM 12185 / C2A).